A 406-amino-acid chain; its full sequence is Cytochrome bc1 complex Rieske iron-sulfur subunit (406 aa).

Helical transmembrane passes span 56-76 (VGIWFGIGIVSALAFLAVYLF), 98-118 (LLGLTSGLAILSLGIGVIFYI), and 166-186 (MLGIGGVLAGLTIIAPLGGMV). The Rieske domain occupies 291–388 (HGPRNAVMLI…ITVDEEGYLV (98 aa)). 4 residues coordinate [2Fe-2S] cluster: Cys331, His333, Cys350, and His353. Cys336 and Cys352 form a disulfide bridge.

Belongs to the Rieske iron-sulfur protein family. The cytochrome bc1 complex is composed of a cytochrome b (QcrB), the Rieske iron-sulfur protein (QcrA) and a diheme cytochrome c (QcrC) subunit. The bc1 complex forms a supercomplex with cytochrome c oxidase (cytochrome aa3). It depends on [2Fe-2S] cluster as a cofactor.

Its subcellular location is the cell membrane. Iron-sulfur subunit of the cytochrome bc1 complex, an essential component of the respiratory electron transport chain required for ATP synthesis. The bc1 complex catalyzes the oxidation of menaquinol and the reduction of cytochrome c in the respiratory chain. The bc1 complex operates through a Q-cycle mechanism that couples electron transfer to generation of the proton gradient that drives ATP synthesis. The sequence is that of Cytochrome bc1 complex Rieske iron-sulfur subunit (qcrA) from Corynebacterium diphtheriae (strain ATCC 700971 / NCTC 13129 / Biotype gravis).